Reading from the N-terminus, the 504-residue chain is MVGRGKGKGREHVLLVVFPAQGHISPALQLAFKIVAHSSIDLTFLTSSSAVASILIGLPPTAPALNFAAFSQGNLHNDDDDDDDAKDYMHTLCKHGSQSVRDIIHSTKKGQGQGQGQGQGQGQGQGHPITRILYTTLLPWAADVAREFRLPSVLLWTQPVTTFLTFHYYFTGYEDAINKVRNQQGTEDDSTIQLPRLPLLSSRDLHSFMLPSNPFKGAINTFKEHLEALDAEETPPTILVNSYDALEEEALQAMIPKYKTMGIGPLIPSSVFDTRETTCEVVSLVPDLAQKSKDDCQWHGWLNSKAEGSVIYVSFGSHVKQSKAQTEEIAKGLLASGHPFLWVITSNEEEEGDEIMEQNLVEEIQEKGMMIVPWCAQFQVLKHPSVGCFMTHCGWNSTLESIACGVPMIGFPKMFDQPTISKLIAHVWKVGVRVNAAVDGIVGQEVIKNCIESVMDPDGIGRELNENVRKFMSLGKKAAEEGGSSHNNFKAFLQDMTGGTTTIN.

Histidine 23 (proton acceptor) is an active-site residue. Histidine 23 contributes to the an anthocyanidin binding site. Positions threonine 107–glycine 126 are disordered. Positions glutamine 111–glutamine 125 are enriched in gly residues. UDP-alpha-D-glucose contacts are provided by threonine 157, glutamine 377, histidine 392, tryptophan 395, asparagine 396, serine 397, glutamate 400, aspartate 416, and glutamine 417.

It belongs to the UDP-glycosyltransferase family. Predominantly expressed in petals and weakly in filaments. Not expressed in leaves, stems and other floral organs.

It carries out the reaction an anthocyanidin 3-O-beta-D-glucoside + UDP-alpha-D-glucose = an anthocyanidin 3,5-di-O-beta-D-glucoside + UDP + 2 H(+). Its pathway is pigment biosynthesis; anthocyanin biosynthesis. In terms of biological role, catalyzes the glucosylation at the O-5 position of anthocyanidin 3-glucosides to form anthocyanidin 3,5-di-O-glucosides using UDP-glucose as sugar donor. Anthocyanidin 3,5-di-O-glucosides are molecules that are responsible for pigmentation. Involved in biosynsthesis of accumulate gentiodelphin, a unique polyacylated delphinidin-type anthocyanin, in the petals. Also acts on anthocyanidin 3-O-(6-O-malonylglucoside). Much less active with hydroxycinnamoylglucose derivatives. No activity in the absence of the 3-O-glucoside group. This is Anthocyanidin 3-O-glucoside 5-O-glucosyltransferase (5GT7) from Gentiana triflora (Clustered gentian).